Here is an 88-residue protein sequence, read N- to C-terminus: Large ribosomal subunit protein bL27 (88 aa).

Residues 1 to 21 (MAHKKGASSSRNGRDSNAQRL) form a disordered region. Polar residues predominate over residues 7–19 (ASSSRNGRDSNAQ).

It belongs to the bacterial ribosomal protein bL27 family.

This is Large ribosomal subunit protein bL27 from Frankia casuarinae (strain DSM 45818 / CECT 9043 / HFP020203 / CcI3).